The sequence spans 476 residues: Serine protease HTRA1B (476 aa).

A signal peptide spans 1 to 19 (MRLLILCASIILVPLLCDA). Positions 25-109 (YVIGCPERCD…RGKTGVCVCK (85 aa)) constitute an IGFBP N-terminal domain. 6 disulfides stabilise this stretch: Cys29–Cys54, Cys33–Cys56, Cys38–Cys57, Cys45–Cys60, Cys68–Cys85, and Cys79–Cys106. A Kazal-like domain is found at 94 to 153 (TTTVRRRGKTGVCVCKSSEPVCGSDGVSYRNICELKRVSNRAQKLQQPPIIFIQRGACGK). The interval 200–360 (GSGFVVSEDG…IPSDKIRQFL (161 aa)) is serine protease. Active-site charge relay system residues include His216, Asp246, and Ser324. In terms of domain architecture, PDZ spans 361–463 (AESHDRQAKG…LRAVVRRGNE (103 aa)).

Belongs to the peptidase S1C family. Forms homotrimers. In the presence of substrate, may form higher-order multimers in a PDZ-independent manner.

It is found in the secreted. The protein resides in the cytoplasm. Its subcellular location is the cytosol. Its function is as follows. Serine protease with a variety of targets, including extracellular matrix proteins and proteoglycans. Through cleavage of proteoglycans, may release soluble FGF-glycosaminoglycan complexes that promote the range and intensity of FGF signals in the extracellular space. Regulates the availability of insulin-like growth factors (IGFs) by cleaving IGF-binding proteins. Inhibits signaling mediated by TGF-beta family members. Consequently, may regulate many physiological processes. Intracellularly, degrades TSC2, leading to the activation of TSC2 downstream targets. This is Serine protease HTRA1B (htra1b) from Danio rerio (Zebrafish).